We begin with the raw amino-acid sequence, 593 residues long: MARSDDADSRAARWEKEAHDLSTQVAFLQEELALVRRKLTESPRHVRQLEERLAAAQAQLARLTENNERLVSTLKEARAQIVTLKEEIDRLAQPPSGYGIFLERHDDGTVDVFTGGRKLRVAVSPSLDVAELCRGQEVLLNDALNIVDAFGYERAGEVVMLKEVLAGPDGAPGDRALVVSHSDEERVVHLAETLIGAAIRAGDSLMIEPRSAYAYERIPKSEVEELVLEEVPDVDYTDIGGLHAQIEQIRDAVELPFLHADLFREHQLRPPKGILLYGPPGCGKTLIAKAVANSLAKKIAERRGEEKHTSYFLNIKGPELLNKYVGETERHIRLIFQRAREKAGEGTPVIVFFDEMDSVFRTRGSGVSSDVENTIVPQLLSEIDGVEGLENVIVIGASNREDMIDPAILRPGRLDVKIKIERPDAEAAKDIFSKYILSGLPLHPDDLAEHGGEPQATVAAMIDAVVLRMYSETEENRFLEVTYANGDKDVLYFKDFNSGAMIQNIVDRGKKMAIKEFLTSARKGLRLQHLLDACVDEFRENEDLPNTTNPDDWARISGKKGERIVYIRTLVSGGKGADAGRSIETASNTGQYL.

Positions 5–94 (DDADSRAARW…KEEIDRLAQP (90 aa)) form a coiled coil. Residue 281-286 (GCGKTL) coordinates ATP. The segment at 574-593 (GKGADAGRSIETASNTGQYL) is disordered. Polar residues predominate over residues 584–593 (ETASNTGQYL). Residues 592 to 593 (YL) form a docks into pockets in the proteasome alpha-ring region.

The protein belongs to the AAA ATPase family. In terms of assembly, homohexamer. Assembles into a hexameric ring structure that caps the 20S proteasome core. Strongly interacts with the prokaryotic ubiquitin-like protein Pup through a hydrophobic interface; the interacting region of ARC lies in its N-terminal coiled-coil domain. There is one Pup binding site per ARC hexamer ring. Upon ATP-binding, the C-terminus of ARC interacts with the alpha-rings of the proteasome core, possibly by binding to the intersubunit pockets.

The protein operates within protein degradation; proteasomal Pup-dependent pathway. Its function is as follows. ATPase which is responsible for recognizing, binding, unfolding and translocation of pupylated proteins into the bacterial 20S proteasome core particle. May be essential for opening the gate of the 20S proteasome via an interaction with its C-terminus, thereby allowing substrate entry and access to the site of proteolysis. Thus, the C-termini of the proteasomal ATPase may function like a 'key in a lock' to induce gate opening and therefore regulate proteolysis. The chain is Proteasome-associated ATPase from Salinispora arenicola (strain CNS-205).